The chain runs to 495 residues: Acetyl-coenzyme A carboxylase carboxyl transferase subunit beta, chloroplastic (495 aa).

A disordered region spans residues 187–208 (ESRNSSENEGSSRRTRTKGSDL). The 270-residue stretch at 226–495 (LWVQCENCYG…PLNQKSSKIK (270 aa)) folds into the CoA carboxyltransferase N-terminal domain. The Zn(2+) site is built by C230, C233, C249, and C252. Residues 230-252 (CENCYGLNYKKFLKSKMNICEQC) form a C4-type zinc finger.

It belongs to the AccD/PCCB family. Acetyl-CoA carboxylase is a heterohexamer composed of biotin carboxyl carrier protein, biotin carboxylase and 2 subunits each of ACCase subunit alpha and ACCase plastid-coded subunit beta (accD). Zn(2+) is required as a cofactor. As to expression, RNA expressed in leaf, root and stem; the least expression occurs in stems.

The protein resides in the plastid. The protein localises to the chloroplast stroma. It carries out the reaction N(6)-carboxybiotinyl-L-lysyl-[protein] + acetyl-CoA = N(6)-biotinyl-L-lysyl-[protein] + malonyl-CoA. It participates in lipid metabolism; malonyl-CoA biosynthesis; malonyl-CoA from acetyl-CoA: step 1/1. Component of the acetyl coenzyme A carboxylase (ACC) complex. Biotin carboxylase (BC) catalyzes the carboxylation of biotin on its carrier protein (BCCP) and then the CO(2) group is transferred by the transcarboxylase to acetyl-CoA to form malonyl-CoA. This is Acetyl-coenzyme A carboxylase carboxyl transferase subunit beta, chloroplastic from Nicotiana tabacum (Common tobacco).